Consider the following 127-residue polypeptide: UPF0102 protein SYNAS_23220 (127 aa).

Belongs to the UPF0102 family.

The protein is UPF0102 protein SYNAS_23220 of Syntrophus aciditrophicus (strain SB).